The following is a 586-amino-acid chain: CTP synthase (586 aa).

The amidoligase domain stretch occupies residues 1 to 265; that stretch reads MVRFIFVTGG…ENKVLNFFNI (265 aa). Residue Ser-13 coordinates CTP. Ser-13 provides a ligand contact to UTP. ATP is bound by residues 14–19 and Asp-71; that span reads SLGKGI. Positions 71 and 139 each coordinate Mg(2+). CTP is bound by residues 146–148, 186–191, and Lys-222; these read DIE and KTKPTQ. UTP-binding positions include 186–191 and Lys-222; that span reads KTKPTQ. In terms of domain architecture, Glutamine amidotransferase type-1 spans 290–582; sequence KIAIITKYHK…IKATIEYNKS (293 aa). Gly-352 provides a ligand contact to L-glutamine. Catalysis depends on Cys-379, which acts as the Nucleophile; for glutamine hydrolysis. Residues 380–383 and Glu-403 contribute to the L-glutamine site; that span reads FGMQ. Residues 429–473 form the RPE1 insert domain; that stretch reads AHISKCTYSEAFECDASTVYTNIHEDSNNLSTDKLQIETNFRNMS. An L-glutamine-binding site is contributed by Arg-510. Catalysis depends on residues His-555 and Glu-557.

The protein belongs to the CTP synthase family. Homotetramer.

The enzyme catalyses UTP + L-glutamine + ATP + H2O = CTP + L-glutamate + ADP + phosphate + 2 H(+). The catalysed reaction is L-glutamine + H2O = L-glutamate + NH4(+). It catalyses the reaction UTP + NH4(+) + ATP = CTP + ADP + phosphate + 2 H(+). It participates in pyrimidine metabolism; CTP biosynthesis via de novo pathway; CTP from UDP: step 2/2. Allosterically activated by GTP, when glutamine is the substrate; GTP has no effect on the reaction when ammonia is the substrate. The allosteric effector GTP functions by stabilizing the protein conformation that binds the tetrahedral intermediate(s) formed during glutamine hydrolysis. Inhibited by the product CTP, via allosteric rather than competitive inhibition. In terms of biological role, catalyzes the ATP-dependent amination of UTP to CTP with either L-glutamine or ammonia as the source of nitrogen. Regulates intracellular CTP levels through interactions with the four ribonucleotide triphosphates. This is CTP synthase from Rickettsia prowazekii (strain Madrid E).